The chain runs to 187 residues: Thioredoxin F, chloroplastic (187 aa).

The N-terminal 72 residues, 1 to 72 (MALRLSVSSS…GSDTATVGAE (72 aa)), are a transit peptide targeting the chloroplast. Residues 73 to 186 (AEAVAVTGQV…LIQAIETVKS (114 aa)) form the Thioredoxin domain. Catalysis depends on nucleophile residues Cys-111 and Cys-114. Cysteines 111 and 114 form a disulfide.

The protein belongs to the thioredoxin family. Plant F-type subfamily.

Its subcellular location is the plastid. The protein resides in the chloroplast. Its function is as follows. Thiol-disulfide oxidoreductase involved in the redox regulation of enzymes of both reductive pentose phosphate pathway (Calvin-Benson cycle) and oxidative pentose phosphate pathway. The polypeptide is Thioredoxin F, chloroplastic (Oryza sativa subsp. japonica (Rice)).